A 98-amino-acid chain; its full sequence is Alpha-elicitin hibernalin (98 aa).

Intrachain disulfides connect C3–C71, C27–C56, and C51–C95.

The protein resides in the secreted. Induces local and distal defense responses (incompatible hypersensitive reaction) in plants from the solanaceae and cruciferae families. Elicits leaf necrosis and causes the accumulation of pathogenesis-related proteins. Might interact with the lipidic molecules of the plasma membrane. The polypeptide is Alpha-elicitin hibernalin (Phytophthora hibernalis).